We begin with the raw amino-acid sequence, 368 residues long: Glutamate 5-kinase (368 aa).

Lys-13 lines the ATP pocket. Substrate contacts are provided by Ser-54, Asp-141, and Asn-153. 173–174 provides a ligand contact to ATP; the sequence is SD. The 78-residue stretch at 278–355 folds into the PUA domain; the sequence is RGVITVDEGA…DEIEAILGYA (78 aa).

It belongs to the glutamate 5-kinase family.

It localises to the cytoplasm. It catalyses the reaction L-glutamate + ATP = L-glutamyl 5-phosphate + ADP. It functions in the pathway amino-acid biosynthesis; L-proline biosynthesis; L-glutamate 5-semialdehyde from L-glutamate: step 1/2. Its function is as follows. Catalyzes the transfer of a phosphate group to glutamate to form L-glutamate 5-phosphate. This Ruegeria sp. (strain TM1040) (Silicibacter sp.) protein is Glutamate 5-kinase.